The sequence spans 425 residues: tRNA(Met) cytidine acetate ligase (425 aa).

Residues 7 to 20 (VVEYNPFHFGHLHH), Gly102, Asn162, and 187 to 188 (RI) contribute to the ATP site.

Belongs to the TmcAL family.

The protein resides in the cytoplasm. The enzyme catalyses cytidine(34) in elongator tRNA(Met) + acetate + ATP = N(4)-acetylcytidine(34) in elongator tRNA(Met) + AMP + diphosphate. Catalyzes the formation of N(4)-acetylcytidine (ac(4)C) at the wobble position of elongator tRNA(Met), using acetate and ATP as substrates. First activates an acetate ion to form acetyladenylate (Ac-AMP) and then transfers the acetyl group to tRNA to form ac(4)C34. In Fervidobacterium nodosum (strain ATCC 35602 / DSM 5306 / Rt17-B1), this protein is tRNA(Met) cytidine acetate ligase.